The chain runs to 290 residues: N-acetylneuraminate lyase (290 aa).

2 residues coordinate aceneuramate: S44 and T45. The Proton donor role is filled by Y133. The Schiff-base intermediate with substrate role is filled by K161. The aceneuramate site is built by T163, G185, D187, E188, and S204.

This sequence belongs to the DapA family. NanA subfamily. As to quaternary structure, homotetramer.

The protein localises to the cytoplasm. It catalyses the reaction aceneuramate = aldehydo-N-acetyl-D-mannosamine + pyruvate. Its pathway is amino-sugar metabolism; N-acetylneuraminate degradation; D-fructose 6-phosphate from N-acetylneuraminate: step 1/5. In terms of biological role, catalyzes the reversible aldol cleavage of N-acetylneuraminic acid (sialic acid; Neu5Ac) to form pyruvate and N-acetylmannosamine (ManNAc) via a Schiff base intermediate. The protein is N-acetylneuraminate lyase of Fusobacterium nucleatum subsp. nucleatum (strain ATCC 25586 / DSM 15643 / BCRC 10681 / CIP 101130 / JCM 8532 / KCTC 2640 / LMG 13131 / VPI 4355).